A 429-amino-acid chain; its full sequence is Adenylosuccinate synthetase (429 aa).

Residues 11-17 (GDEGKGK) and 39-41 (GHT) each bind GTP. The active-site Proton acceptor is the aspartate 12. Mg(2+) contacts are provided by aspartate 12 and glycine 39. IMP is bound by residues 12 to 15 (DEGK), 37 to 40 (NAGH), threonine 130, arginine 144, asparagine 226, threonine 241, and arginine 305. Catalysis depends on histidine 40, which acts as the Proton donor. Residue 301 to 307 (VTTGRRR) participates in substrate binding. GTP-binding positions include arginine 307, 333–335 (KLD), and 415–417 (GVG).

Belongs to the adenylosuccinate synthetase family. Homodimer. Mg(2+) serves as cofactor.

It localises to the cytoplasm. It carries out the reaction IMP + L-aspartate + GTP = N(6)-(1,2-dicarboxyethyl)-AMP + GDP + phosphate + 2 H(+). Its pathway is purine metabolism; AMP biosynthesis via de novo pathway; AMP from IMP: step 1/2. Plays an important role in the de novo pathway and in the salvage pathway of purine nucleotide biosynthesis. Catalyzes the first committed step in the biosynthesis of AMP from IMP. The polypeptide is Adenylosuccinate synthetase (Yarrowia lipolytica (strain CLIB 122 / E 150) (Yeast)).